A 238-amino-acid polypeptide reads, in one-letter code: ATP-dependent Clp protease ATP-binding subunit CLPT1, chloroplastic (238 aa).

The transit peptide at 1 to 64 directs the protein to the chloroplast; sequence MASYTVSFIP…VPKLRCLTSA (64 aa). The region spanning 83-228 is the Clp R domain; that stretch reads IPKWSARAIK…KEVEKSMNED (146 aa). Repeat regions lie at residues 86–151 and 163–228; these read WSAR…LGKS and LTEP…MNED.

It belongs to the ClpA/ClpB family. In terms of assembly, monomer and homodimer. Binds to the CLP3-6 ring (P-ring). The dimers monomerize before association to the P-ring. Component of the chloroplastic Clp protease core complex which consist of at least 16 proteins: CLPP4 (3 copies), CLPP5 (3 copies), CLPR4 (2 copies), ClpP1 (1 copy), CLPP6 (1 copy), CLPR2 (1 copy), CLPT1 (1 copy), CLPT2 (1 copy) and 3 copies of CLPP3 and/or CLPR1 and/or CLPR3. Interacts with CLPC2 and CLPD. Interacts with CPN21. No interactions with CLPS1.

The protein resides in the plastid. It localises to the chloroplast. In terms of biological role, accessory protein regulating the assembly of the plastidial Clp protease system. CLPT1 first binds to the heptameric P-ring containing the CLP3-6 subunits followed by CLPT2, and only then does the P-ring combine with the R-ring composed of the clpP1 and CLPR1-4 subunits. Once the core complex is fully assembled, it then associates to the CLPC chaperone partner to form the functional protease. CLPT1 and CLPT2 are partially redundant. This chain is ATP-dependent Clp protease ATP-binding subunit CLPT1, chloroplastic, found in Arabidopsis thaliana (Mouse-ear cress).